Consider the following 155-residue polypeptide: Small ribosomal subunit protein uS17 (155 aa).

This sequence belongs to the universal ribosomal protein uS17 family. As to quaternary structure, component of the small ribosomal subunit. Mature ribosomes consist of a small (40S) and a large (60S) subunit. The 40S subunit contains about 32 different proteins and 1 molecule of RNA (18S). The 60S subunit contains 45 different proteins and 3 molecules of RNA (25S, 5.8S and 5S).

It is found in the cytoplasm. In terms of biological role, component of the ribosome, a large ribonucleoprotein complex responsible for the synthesis of proteins in the cell. The small ribosomal subunit (SSU) binds messenger RNAs (mRNAs) and translates the encoded message by selecting cognate aminoacyl-transfer RNA (tRNA) molecules. The large subunit (LSU) contains the ribosomal catalytic site termed the peptidyl transferase center (PTC), which catalyzes the formation of peptide bonds, thereby polymerizing the amino acids delivered by tRNAs into a polypeptide chain. The nascent polypeptides leave the ribosome through a tunnel in the LSU and interact with protein factors that function in enzymatic processing, targeting, and the membrane insertion of nascent chains at the exit of the ribosomal tunnel. The polypeptide is Small ribosomal subunit protein uS17 (Candida albicans (strain SC5314 / ATCC MYA-2876) (Yeast)).